A 240-amino-acid chain; its full sequence is uncharacterized protein (240 aa).

Disordered stretches follow at residues 125–148 and 177–240; these read RRLDFSSEDGEEEEENDYIDEDVD and DESN…RKSR. Over residues 130–148 the composition is skewed to acidic residues; sequence SSEDGEEEEENDYIDEDVD. Positions 192–203 are enriched in basic and acidic residues; sequence SPRKSHIDHDFV. Positions 204-217 are enriched in acidic residues; the sequence is IPEDEMLSEEEEQE. The residue at position 231 (Ser-231) is a Phosphoserine.

It belongs to the UTP5 family.

The protein localises to the cytoplasm. The protein resides in the nucleus. This is an uncharacterized protein from Schizosaccharomyces pombe (strain 972 / ATCC 24843) (Fission yeast).